The following is an 896-amino-acid chain: NET1-associated nuclear protein 1 (896 aa).

4 WD repeats span residues 295 to 334 (WHID…QQFL), 490 to 542 (LQDP…TNWN), 552 to 595 (GISV…SNWC), and 605 to 645 (NHFS…ESLE).

Interacts with snoRNA U3. Interacts with MPP10. Component of the ribosomal small subunit (SSU) processome composed of at least 40 protein subunits and snoRNA U3. In the absence of snoRNA3, forms a complex with other t-UTPs. This complex can associate with pre-18S ribosomal RNAs.

The protein localises to the nucleus. It is found in the nucleolus. Its function is as follows. Involved in nucleolar processing of pre-18S ribosomal RNA. Required for optimal pre-ribosomal RNA transcription by RNA polymerase I together with a subset of U3 proteins required for transcription (t-UTPs). This chain is NET1-associated nuclear protein 1 (NAN1), found in Saccharomyces cerevisiae (strain ATCC 204508 / S288c) (Baker's yeast).